A 34-amino-acid chain; its full sequence is uncharacterized protein (34 aa).

This is an uncharacterized protein from Saccharomyces cerevisiae (strain ATCC 204508 / S288c) (Baker's yeast).